The sequence spans 54 residues: AEDRSSLSGVSDAEAKEFHALFVSSFMGFMVVAVLAHVLAWAWRPWIPGPKGWA.

At 1–20 the chain is on the cytoplasmic side; it reads AEDRSSLSGVSDAEAKEFHA. A bacteriochlorophyll-binding residues include His19 and His37. A helical membrane pass occupies residues 21–43; the sequence is LFVSSFMGFMVVAVLAHVLAWAW. The Periplasmic segment spans residues 44 to 54; it reads RPWIPGPKGWA.

Belongs to the antenna complex beta subunit family. In terms of assembly, the core complex is formed by different alpha and beta chains, binding bacteriochlorophyll molecules, and arranged most probably in tetrameric structures disposed around the reaction center. The non-pigmented gamma chains may constitute additional components.

It localises to the cell inner membrane. Antenna complexes are light-harvesting systems, which transfer the excitation energy to the reaction centers. The chain is Light-harvesting protein B-880 beta chain from Rhodoblastus acidophilus (Rhodopseudomonas acidophila).